An 88-amino-acid chain; its full sequence is uncharacterized protein (88 aa).

A disordered region spans residues 1–54 (AVDAYDDDDNLKNEEGDYYNESDDGYSGDEEEEEKQEEDEQDDDDLQFDDGVPE). A compositionally biased stretch (acidic residues) spans 16–53 (GDYYNESDDGYSGDEEEEEKQEEDEQDDDDLQFDDGVP).

Predominantly in developing fruit.

This is an uncharacterized protein from Fragaria ananassa (Strawberry).